We begin with the raw amino-acid sequence, 59 residues long: UPF0434 protein Pnec_0311 (59 aa).

Belongs to the UPF0434 family.

The sequence is that of UPF0434 protein Pnec_0311 from Polynucleobacter necessarius subsp. necessarius (strain STIR1).